The primary structure comprises 354 residues: Guanine nucleotide-binding protein alpha-16 subunit (354 aa).

The N-myristoyl glycine moiety is linked to residue Gly2. Cys3 is lipidated: S-palmitoyl cysteine. Residues 31–354 (KTVKLLLLGA…RDNLRTCGLY (324 aa)) enclose the G-alpha domain. Residues 34 to 47 (KLLLLGAGESGKST) form a G1 motif region. GTP contacts are provided by residues 39–46 (GAGESGKS), 174–180 (LRTRIKT), 199–203 (DVGGQ), 268–271 (NKKD), and Ala326. Positions 46 and 180 each coordinate Mg(2+). The tract at residues 172–180 (DVLRTRIKT) is G2 motif. Residues 195 to 204 (FVVFDVGGQR) are G3 motif. The tract at residues 264 to 271 (ILFLNKKD) is G4 motif. The segment at 324–329 (TCATDT) is G5 motif.

It belongs to the G-alpha family. G proteins are composed of 3 units; alpha, beta and gamma. The alpha chain contains the guanine nucleotide binding site.

In terms of biological role, guanine nucleotide-binding proteins (G proteins) are involved as modulators or transducers in various transmembrane signaling systems. In the 1-cell embryo, probably together with goa-1, controls nuclear rotation and spindle elongation during mitosis. During the first embryonic cell divisons, plays a role in gpr-1/2 cortical localization and in the proper orientation of EMS blastomere mitotic spindle. The protein is Guanine nucleotide-binding protein alpha-16 subunit (gpa-16) of Caenorhabditis briggsae.